The sequence spans 307 residues: Ribonuclease Z (307 aa).

Zn(2+) is bound by residues histidine 63, histidine 65, aspartate 67, histidine 68, histidine 141, aspartate 212, and histidine 270. The active-site Proton acceptor is the aspartate 67.

It belongs to the RNase Z family. As to quaternary structure, homodimer. Zn(2+) serves as cofactor.

The catalysed reaction is Endonucleolytic cleavage of RNA, removing extra 3' nucleotides from tRNA precursor, generating 3' termini of tRNAs. A 3'-hydroxy group is left at the tRNA terminus and a 5'-phosphoryl group is left at the trailer molecule.. Its function is as follows. Zinc phosphodiesterase, which displays some tRNA 3'-processing endonuclease activity. Probably involved in tRNA maturation, by removing a 3'-trailer from precursor tRNA. The sequence is that of Ribonuclease Z from Bacillus cereus (strain ATCC 14579 / DSM 31 / CCUG 7414 / JCM 2152 / NBRC 15305 / NCIMB 9373 / NCTC 2599 / NRRL B-3711).